We begin with the raw amino-acid sequence, 199 residues long: Recombination protein RecR (199 aa).

Residues 56 to 71 (CATCGNVAQEEQCNIC) form a C4-type zinc finger. The 96-residue stretch at 79–174 (SVICVVEEPK…KVTRLASGLP (96 aa)) folds into the Toprim domain.

It belongs to the RecR family.

In terms of biological role, may play a role in DNA repair. It seems to be involved in an RecBC-independent recombinational process of DNA repair. It may act with RecF and RecO. The sequence is that of Recombination protein RecR from Streptomyces coelicolor (strain ATCC BAA-471 / A3(2) / M145).